Here is a 482-residue protein sequence, read N- to C-terminus: Caspase-8 (482 aa).

A propeptide spanning residues 1-218 (MDFHSCLYDI…DMWDSPGEQE (218 aa)) is cleaved from the precursor. DED domains lie at 2-80 (DFHS…RVLK) and 100-177 (AYRV…RIDD). Ser188 and Ser213 each carry phosphoserine. His319 is a catalytic residue. At Tyr336 the chain carries Phosphotyrosine. The active site involves Cys362. Positions 379–388 (LEQEHVLEED) are excised as a propeptide. The residue at position 390 (Ser390) is a Phosphoserine; by CDK1.

The protein belongs to the peptidase C14A family. As to quaternary structure, heterotetramer that consists of two anti-parallel arranged heterodimers, each one formed by a 18 kDa (p18) and a 10 kDa (p10) subunit. Component of the death-induced signaling complex (DISC) composed of cell surface receptor FAS/CD95 or TNFRSF1A, adapter protein FADD and the CASP8 protease; recruitment of CASP8 to the complex is required for processing of CASP8 into the p18 and p10 subunits. Component of the AIM2 PANoptosome complex, a multiprotein complex that drives inflammatory cell death (PANoptosis). Interacts with CFLAR and PEA15. Interacts with RFFL and RNF34; negatively regulate CASP8 through proteasomal degradation. Interacts with TNFAIP8L2. Interacts with CASP8AP2. Interacts with NOL3; decreases CASP8 activity in a mitochondria localization- and phosphorylation-dependent manner and this interaction is dissociated by calcium. Interacts with UBR2. Interacts with RIPK1. Interacts with stimulated TNFRSF10B; this interaction is followed by CASP8 proteolytic cleavage and activation. Post-translationally, generation of the subunits requires association with the death-inducing signaling complex (DISC), whereas additional processing is likely due to the autocatalytic activity of the activated protease. GZMB and CASP10 can be involved in these processing events. In terms of processing, phosphorylation on Ser-389 during mitosis by CDK1 inhibits activation by proteolysis and prevents apoptosis. This phosphorylation occurs in cancer cell lines, as well as in primary breast tissues and lymphocytes.

It localises to the cytoplasm. The protein localises to the nucleus. The catalysed reaction is Strict requirement for Asp at position P1 and has a preferred cleavage sequence of (Leu/Asp/Val)-Glu-Thr-Asp-|-(Gly/Ser/Ala).. CASP8 activity is restricted by RIPK1. Its function is as follows. Thiol protease that plays a key role in programmed cell death by acting as a molecular switch for apoptosis, necroptosis and pyroptosis, and is required to prevent tissue damage during embryonic development and adulthood. Initiator protease that induces extrinsic apoptosis by mediating cleavage and activation of effector caspases responsible for FAS/CD95-mediated and TNFRSF1A-induced cell death. Cleaves and activates effector caspases CASP3, CASP4, CASP6, CASP7, CASP9 and CASP10. Binding to the adapter molecule FADD recruits it to either receptor FAS/CD95 or TNFRSF1A. The resulting aggregate called the death-inducing signaling complex (DISC) performs CASP8 proteolytic activation. The active dimeric enzyme is then liberated from the DISC and free to activate downstream apoptotic proteases. Proteolytic fragments of the N-terminal propeptide (termed CAP3, CAP5 and CAP6) are likely retained in the DISC. In addition to extrinsic apoptosis, also acts as a negative regulator of necroptosis: acts by cleaving RIPK1 at 'Asp-325', which is crucial to inhibit RIPK1 kinase activity, limiting TNF-induced apoptosis, necroptosis and inflammatory response. Also able to initiate pyroptosis by mediating cleavage and activation of gasdermin-C and -D (GSDMC and GSDMD, respectively): gasdermin cleavage promotes release of the N-terminal moiety that binds to membranes and forms pores, triggering pyroptosis. Initiates pyroptosis following inactivation of MAP3K7/TAK1. Also acts as a regulator of innate immunity by mediating cleavage and inactivation of N4BP1 downstream of TLR3 or TLR4, thereby promoting cytokine production. May participate in the Granzyme B (GZMB) cell death pathways. Cleaves PARP1 and PARP2. This chain is Caspase-8, found in Rattus norvegicus (Rat).